A 200-amino-acid polypeptide reads, in one-letter code: uncharacterized protein (200 aa).

3 disordered regions span residues 1 to 27, 42 to 79, and 169 to 200; these read MTDTRREQEKDERRKLQEQSRQNEAET, IPKEAKGNEPLLENYKSGLQETRKELETTPDATKSTNA, and HGRAGIVRNPQAAQHQRQRQMEKTGAGREHGR. Residues 187–200 are compositionally biased toward basic and acidic residues; that stretch reads RQMEKTGAGREHGR.

This is an uncharacterized protein from Shigella flexneri.